The chain runs to 577 residues: Urease subunit alpha (577 aa).

Residues glycine 136–phenylalanine 577 form the Urease domain. Residues histidine 141, histidine 143, and lysine 224 each coordinate Ni(2+). Lysine 224 is modified (N6-carboxylysine). Residue histidine 226 coordinates substrate. Ni(2+) is bound by residues histidine 253 and histidine 279. The Proton donor role is filled by histidine 327. Aspartate 367 contributes to the Ni(2+) binding site.

It belongs to the metallo-dependent hydrolases superfamily. Urease alpha subunit family. In terms of assembly, heterotrimer of UreA (gamma), UreB (beta) and UreC (alpha) subunits. Three heterotrimers associate to form the active enzyme. The cofactor is Ni cation. Post-translationally, carboxylation allows a single lysine to coordinate two nickel ions.

Its subcellular location is the cytoplasm. The enzyme catalyses urea + 2 H2O + H(+) = hydrogencarbonate + 2 NH4(+). It functions in the pathway nitrogen metabolism; urea degradation; CO(2) and NH(3) from urea (urease route): step 1/1. The protein is Urease subunit alpha of Mycobacterium ulcerans (strain Agy99).